The chain runs to 283 residues: Putative ABC transporter ATP-binding protein MA_4342 (283 aa).

The 236-residue stretch at 3-238 folds into the ABC transporter domain; sequence IILENVSFFY…KNVPLPPVTS (236 aa). Position 40–47 (40–47) interacts with ATP; it reads GEKGAGKS.

The protein belongs to the ABC transporter superfamily.

Its subcellular location is the cell membrane. Its function is as follows. Probably part of an ABC transporter complex. Responsible for energy coupling to the transport system. The sequence is that of Putative ABC transporter ATP-binding protein MA_4342 from Methanosarcina acetivorans (strain ATCC 35395 / DSM 2834 / JCM 12185 / C2A).